A 97-amino-acid polypeptide reads, in one-letter code: Nucleoid-associated protein HP_0035 (97 aa).

Belongs to the YbaB/EbfC family. As to quaternary structure, homodimer.

It localises to the cytoplasm. The protein resides in the nucleoid. Its function is as follows. Binds to DNA and alters its conformation. May be involved in regulation of gene expression, nucleoid organization and DNA protection. This chain is Nucleoid-associated protein HP_0035, found in Helicobacter pylori (strain ATCC 700392 / 26695) (Campylobacter pylori).